A 3130-amino-acid chain; its full sequence is DNA polymerase zeta catalytic subunit (3130 aa).

Disordered regions lie at residues 263 to 295 (AIWE…VPAT), 425 to 457 (GYRG…NEPQ), 487 to 510 (LCRN…MEWS), 524 to 548 (LDGT…SSVI), 697 to 728 (PNEN…EKGN), and 817 to 871 (VTYK…EKDN). Residues 286–295 (SQDHRFVPAT) are compositionally biased toward basic and acidic residues. The segment covering 497 to 509 (EDDDSSSGEEMEW) has biased composition (acidic residues). Composition is skewed to polar residues over residues 533-548 (DNPL…SSVI) and 699-728 (ENTL…EKGN). A compositionally biased stretch (basic residues) spans 828-838 (SRLKLNKRKLA). Over residues 842–854 (ETSTKSSETGSTK) the composition is skewed to low complexity. Over residues 855–866 (DNFIQNNPCNSN) the composition is skewed to polar residues. Ser-1030 is modified (phosphoserine). 3 disordered regions span residues 1035-1095 (YPIY…YNAE), 1162-1231 (SRIG…DEKI), and 1537-1600 (RQQK…KLLK). A Phosphothreonine modification is found at Thr-1041. 2 stretches are compositionally biased toward basic residues: residues 1043–1061 (KKSH…KTGK) and 1166–1179 (KTSR…KSKA). Basic and acidic residues predominate over residues 1213 to 1231 (KTNEKGTSRKHTTLKDEKI). Residues 1540–1565 (KAQNANTTQDPLSNKHQPNKNISGSL) show a composition bias toward polar residues. The segment covering 1570–1589 (ANKRTRSVTSPRKPRTPRST) has biased composition (basic residues). Residues 1590–1600 (KQKEKIPKLLK) are compositionally biased toward basic and acidic residues. Ser-1724 carries the phosphoserine modification. Disordered stretches follow at residues 1845 to 1882 (NDML…KPLM), 1962 to 1984 (NPRP…SNSP), 2017 to 2050 (ERSK…PVVP), 2080 to 2150 (PTTG…SPVE), and 2216 to 2236 (APGL…NKKG). Residues 1847–1898 (MLTPTPDSSPRSTSSPSQSKNGSFTPRTANILKPLMSPPSREEIMATLLDHD) form a mediates interaction with MAD2L2 region. The segment covering 1849–1865 (TPTPDSSPRSTSSPSQS) has biased composition (low complexity). A Phosphoserine modification is found at Ser-1967. Positions 2080–2092 (PTTGCSQTASESQ) are enriched in polar residues. Positions 2113 to 2122 (YYISYSSPDS) are enriched in low complexity. Residues 2221 to 2236 (PLSTEPKTQKLSNKKG) are compositionally biased toward polar residues. Zn(2+)-binding residues include Cys-3042, Cys-3045, Cys-3054, and Cys-3057. The segment at 3042–3057 (CPVCDDLTQHGICSKC) adopts a CysA-type zinc-finger fold. [4Fe-4S] cluster is bound by residues Cys-3086, Cys-3089, Cys-3099, and Cys-3104. A CysB motif motif is present at residues 3086–3104 (CKNCTGCFDRHIPCVSLNC).

It belongs to the DNA polymerase type-B family. In terms of assembly, heterodimer with MAD2L2. This dimer forms the minimal DNA polymerase zeta complex (Pol-zeta2), with REV3L bearing DNA polymerase catalytic activity, although its activity is very low in this context. Component of the tetrameric Pol-zeta complex (Pol-zeta4), which consists of REV3L, MAD2L2, POLD2 and POLD3; Pol-zeta4 is the fully active form of DNA polymerase zeta. It depends on [4Fe-4S] cluster as a cofactor. In terms of tissue distribution, ubiquitously expressed.

The protein resides in the nucleus. It catalyses the reaction DNA(n) + a 2'-deoxyribonucleoside 5'-triphosphate = DNA(n+1) + diphosphate. Functionally, catalytic subunit of the DNA polymerase zeta complex, an error-prone polymerase specialized in translesion DNA synthesis (TLS). Lacks an intrinsic 3'-5' exonuclease activity and thus has no proofreading function. This Homo sapiens (Human) protein is DNA polymerase zeta catalytic subunit (REV3L).